A 473-amino-acid polypeptide reads, in one-letter code: 3-isopropylmalate dehydratase large subunit (473 aa).

The interval 289-319 (TVTWGTTPGQTAGITEPIPDPDDLPEEDRDT) is disordered. Residues 291-301 (TWGTTPGQTAG) show a composition bias toward polar residues. Residues 307 to 317 (PDPDDLPEEDR) are compositionally biased toward acidic residues. [4Fe-4S] cluster-binding residues include C348, C408, and C411.

It belongs to the aconitase/IPM isomerase family. LeuC type 1 subfamily. In terms of assembly, heterodimer of LeuC and LeuD. It depends on [4Fe-4S] cluster as a cofactor.

It catalyses the reaction (2R,3S)-3-isopropylmalate = (2S)-2-isopropylmalate. Its pathway is amino-acid biosynthesis; L-leucine biosynthesis; L-leucine from 3-methyl-2-oxobutanoate: step 2/4. In terms of biological role, catalyzes the isomerization between 2-isopropylmalate and 3-isopropylmalate, via the formation of 2-isopropylmaleate. This chain is 3-isopropylmalate dehydratase large subunit, found in Halorubrum lacusprofundi (strain ATCC 49239 / DSM 5036 / JCM 8891 / ACAM 34).